Reading from the N-terminus, the 101-residue chain is ATP synthase subunit c (101 aa).

Helical transmembrane passes span A31–Q51 and A81–G101.

Belongs to the ATPase C chain family. F-type ATPases have 2 components, F(1) - the catalytic core - and F(0) - the membrane proton channel. F(1) has five subunits: alpha(3), beta(3), gamma(1), delta(1), epsilon(1). F(0) has three main subunits: a(1), b(2) and c(10-14). The alpha and beta chains form an alternating ring which encloses part of the gamma chain. F(1) is attached to F(0) by a central stalk formed by the gamma and epsilon chains, while a peripheral stalk is formed by the delta and b chains.

The protein resides in the cell membrane. F(1)F(0) ATP synthase produces ATP from ADP in the presence of a proton or sodium gradient. F-type ATPases consist of two structural domains, F(1) containing the extramembraneous catalytic core and F(0) containing the membrane proton channel, linked together by a central stalk and a peripheral stalk. During catalysis, ATP synthesis in the catalytic domain of F(1) is coupled via a rotary mechanism of the central stalk subunits to proton translocation. Its function is as follows. Key component of the F(0) channel; it plays a direct role in translocation across the membrane. A homomeric c-ring of between 10-14 subunits forms the central stalk rotor element with the F(1) delta and epsilon subunits. This is ATP synthase subunit c from Mesomycoplasma hyopneumoniae (strain 7448) (Mycoplasma hyopneumoniae).